Here is a 431-residue protein sequence, read N- to C-terminus: Foot protein 1 variant 2 (431 aa).

Positions 1 to 20 (MARNMNILTLFAVLLGSASA) are cleaved as a signal peptide. Tyr-22 is modified (3',4'-dihydroxyphenylalanine). Pro-33 carries the 4-hydroxyproline modification. The stretch at 41–50 (VPPPAWTAWK) is one A-1; approximate repeat. A 13 X 10 AA A-P-P-P-A-W-T-A-W-K region spans residues 41–270 (VPPPAWTAWK…APPPAWTAWK (230 aa)). Residues Trp-46, Trp-49, Trp-56, and Trp-59 each carry the 7'-hydroxytryptophan modification. C-linked (Man) hydroxytryptophan glycosylation is found at Trp-46, Trp-49, Trp-56, and Trp-59. One copy of the A-2; approximate repeat lies at 51 to 60 (AHPPAWTAWK). Residues 61-70 (ATPKPWTAWK) form a B-1 repeat. The 27 X 10 AA A-T-P-K-P-W-T-A-W-K stretch occupies residues 61-310 (ATPKPWTAWK…ATPKPWTAWR (250 aa)). Pro-65 carries the post-translational modification 4-hydroxyproline. A glycan (C-linked (Man) tryptophan) is linked at Trp-66. Trp-69 is modified (7'-hydroxytryptophan). Trp-69 is a glycosylation site (C-linked (Man) hydroxytryptophan). Residues 71–80 (APPPAWTAWK) form an A-3 repeat. 3 positions are modified to 4-hydroxyproline: Pro-72, Pro-73, and Pro-74. Residues Trp-76 and Trp-79 each carry the 7'-hydroxytryptophan modification. C-linked (Man) hydroxytryptophan glycans are attached at residues Trp-76 and Trp-79. The B-2 repeat unit spans residues 81–90 (ATPKPWTAWK). A 4-hydroxyproline modification is found at Pro-85. Trp-86 carries C-linked (Man) tryptophan glycosylation. Trp-89 is subject to 7'-hydroxytryptophan. Trp-89 is a glycosylation site (C-linked (Man) hydroxytryptophan). An A-4; approximate repeat occupies 91-100 (APPPTWTAWK). 4-hydroxyproline is present on residues Pro-92, Pro-93, and Pro-94. A 7'-hydroxytryptophan mark is found at Trp-96 and Trp-99. C-linked (Man) hydroxytryptophan glycans are attached at residues Trp-96 and Trp-99. The B-3 repeat unit spans residues 101-110 (ATPKPWTAWK). 4-hydroxyproline is present on Pro-105. A C-linked (Man) tryptophan glycan is attached at Trp-106. Trp-109 carries the post-translational modification 7'-hydroxytryptophan. A C-linked (Man) hydroxytryptophan glycan is attached at Trp-109. Residues 111–120 (APPPVWTAWK) form an A-5; approximate repeat. 4-hydroxyproline is present on residues Pro-112, Pro-113, and Pro-114. Trp-116 and Trp-119 each carry 7'-hydroxytryptophan. Residues Trp-116 and Trp-119 are each glycosylated (C-linked (Man) hydroxytryptophan). One copy of the B-4; approximate repeat lies at 121-130 (ATPKPRTAWK). Residue Pro-125 is modified to 4-hydroxyproline. Residue Trp-129 is modified to 7'-hydroxytryptophan. Residue Trp-129 is glycosylated (C-linked (Man) hydroxytryptophan). The A-6; approximate repeat unit spans residues 131–140 (APPPTWTAWK). Pro-132, Pro-133, and Pro-134 each carry 4-hydroxyproline. 2 positions are modified to 7'-hydroxytryptophan: Trp-136 and Trp-139. Residues Trp-136 and Trp-139 are each glycosylated (C-linked (Man) hydroxytryptophan). A B-5; approximate repeat occupies 141–150 (AAPKPWTAWK). Position 145 is a 4-hydroxyproline (Pro-145). Trp-146 carries C-linked (Man) tryptophan glycosylation. 7'-hydroxytryptophan is present on Trp-149. Trp-149 carries a C-linked (Man) hydroxytryptophan glycan. The B-6 repeat unit spans residues 151–160 (ATPKPWTAWK). Position 155 is a 4-hydroxyproline (Pro-155). C-linked (Man) tryptophan glycosylation is present at Trp-156. Trp-159 carries the post-translational modification 7'-hydroxytryptophan. The C-linked (Man) hydroxytryptophan glycan is linked to Trp-159. One copy of the A-7 repeat lies at 161-170 (APPPAWTAWK). Pro-162, Pro-163, and Pro-164 each carry 4-hydroxyproline. 7'-hydroxytryptophan occurs at positions 166 and 169. 2 C-linked (Man) hydroxytryptophan glycosylation sites follow: Trp-166 and Trp-169. One copy of the B-7 repeat lies at 171-180 (ATPKPWTAWK). Pro-175 is subject to 4-hydroxyproline. C-linked (Man) tryptophan glycosylation is present at Trp-176. At Trp-179 the chain carries 7'-hydroxytryptophan. A C-linked (Man) hydroxytryptophan glycan is attached at Trp-179. The B-8 repeat unit spans residues 181 to 190 (ATPKPWTAWK). Residue Pro-185 is modified to 4-hydroxyproline. A C-linked (Man) tryptophan glycan is attached at Trp-186. Trp-189 is subject to 7'-hydroxytryptophan. The C-linked (Man) hydroxytryptophan glycan is linked to Trp-189. The stretch at 191–200 (ATPKPWTAWK) is one B-9 repeat. Position 195 is a 4-hydroxyproline (Pro-195). Trp-196 is a glycosylation site (C-linked (Man) tryptophan). Position 199 is a 7'-hydroxytryptophan (Trp-199). Trp-199 is a glycosylation site (C-linked (Man) hydroxytryptophan). The stretch at 201–210 (ATPKPWTVWK) is one B-10; approximate repeat. The residue at position 205 (Pro-205) is a 4-hydroxyproline. C-linked (Man) tryptophan glycosylation occurs at Trp-206. Position 209 is a 7'-hydroxytryptophan (Trp-209). Trp-209 carries a C-linked (Man) hydroxytryptophan glycan. The B-11 repeat unit spans residues 211–220 (ATPKPWTAWK). Residue Pro-215 is modified to 4-hydroxyproline. A glycan (C-linked (Man) tryptophan) is linked at Trp-216. Trp-219 is subject to 7'-hydroxytryptophan. Trp-219 carries C-linked (Man) hydroxytryptophan glycosylation. An A-8 repeat occupies 221–230 (APPPAWTAWK). 4-hydroxyproline is present on residues Pro-222, Pro-223, and Pro-224. 7'-hydroxytryptophan is present on residues Trp-226 and Trp-229. Trp-226 and Trp-229 each carry a C-linked (Man) hydroxytryptophan glycan. One copy of the B-12 repeat lies at 231 to 240 (ATPKPWTAWK). 4-hydroxyproline is present on Pro-235. Trp-236 carries a C-linked (Man) tryptophan glycan. Trp-239 bears the 7'-hydroxytryptophan mark. Trp-239 carries a C-linked (Man) hydroxytryptophan glycan. The A-9 repeat unit spans residues 241 to 250 (APPPAWTAWK). 3 positions are modified to 4-hydroxyproline: Pro-242, Pro-243, and Pro-244. 7'-hydroxytryptophan occurs at positions 246 and 249. Residues Trp-246 and Trp-249 are each glycosylated (C-linked (Man) hydroxytryptophan). The stretch at 251-260 (ATPKPWTAWK) is one B-13 repeat. Pro-255 is modified (4-hydroxyproline). Trp-256 carries a C-linked (Man) tryptophan glycan. Trp-259 is modified (7'-hydroxytryptophan). The C-linked (Man) hydroxytryptophan glycan is linked to Trp-259. One copy of the A-10 repeat lies at 261–270 (APPPAWTAWK). 3 positions are modified to 4-hydroxyproline: Pro-262, Pro-263, and Pro-264. Trp-266 and Trp-269 each carry 7'-hydroxytryptophan. C-linked (Man) hydroxytryptophan glycans are attached at residues Trp-266 and Trp-269. The B-14 repeat unit spans residues 271–280 (ATPKPWTAWK). Pro-275 bears the 4-hydroxyproline mark. The C-linked (Man) tryptophan glycan is linked to Trp-276. A 7'-hydroxytryptophan modification is found at Trp-279. A C-linked (Man) hydroxytryptophan glycan is attached at Trp-279. Residues 281–290 (ATPKPWTAWK) form a B-15 repeat. Pro-285 is modified (4-hydroxyproline). Residue Trp-286 is glycosylated (C-linked (Man) tryptophan). The residue at position 289 (Trp-289) is a 7'-hydroxytryptophan. Trp-289 is a glycosylation site (C-linked (Man) hydroxytryptophan). The stretch at 291 to 300 (ATPKPWTAWK) is one B-16 repeat. Pro-295 carries the 4-hydroxyproline modification. Trp-296 carries C-linked (Man) tryptophan glycosylation. Trp-299 carries the post-translational modification 7'-hydroxytryptophan. The C-linked (Man) hydroxytryptophan glycan is linked to Trp-299. The B-17; approximate repeat unit spans residues 301 to 310 (ATPKPWTAWR). 4-hydroxyproline is present on Pro-305. Trp-306 is a glycosylation site (C-linked (Man) tryptophan). 7'-hydroxytryptophan is present on Trp-309. A glycan (C-linked (Man) hydroxytryptophan) is linked at Trp-309. The tract at residues 322 to 377 (GHGYGGYGKPGKPGKPGSKGPRGPAGPPGATGKTGRTGATGKRGPPGYPGKPGVPG) is disordered. Residues 323-332 (HGYGGYGKPG) show a composition bias toward gly residues. A Collagen-like domain is found at 329–380 (GKPGKPGKPGSKGPRGPAGPPGATGKTGRTGATGKRGPPGYPGKPGVPGRNG). Low complexity predominate over residues 336–366 (KPGSKGPRGPAGPPGATGKTGRTGATGKRGP). Pro-367, Pro-370, and Pro-376 each carry 4-hydroxyproline.

In terms of tissue distribution, produced by the byssal gland.

It localises to the secreted. Functionally, provides adhesiveness to the mussel's foot. Mussels produce one of the strongest water insoluble glues. The mussel's adhesive is a bundle of threads, called a byssus, formed by a fibrous collagenous core coated with adhesive proteins. This chain is Foot protein 1 variant 2, found in Perna viridis (Asian green mussel).